The chain runs to 189 residues: Protein Rex (189 aa).

Residues 1-16 are compositionally biased toward basic residues; the sequence is MPKTRRRPRRSQRKRP. Residues 1-27 are disordered; it reads MPKTRRRPRRSQRKRPPTPWPTSQGLD. Positions 2–18 match the Nuclear localization signal, and RNA-binding (RxRE) motif; the sequence is PKTRRRPRRSQRKRPPT. A homomultimerization region spans residues 56–70; that stretch reads RPAYIVTPYWPPVQS. Position 70 is a phosphoserine; by host (serine 70). Positions 73-189 are disordered; the sequence is SPGTPSMDAL…PPSPGPSCPT (117 aa). Positions 80–94 are enriched in low complexity; sequence DALSAQLYSSLSLDS. A Nuclear export signal motif is present at residues 82 to 93; that stretch reads LSAQLYSSLSLD. Positions 123–131 are homomultimerization; it reads PSSRPCANT. The span at 143-164 shows a compositional bias: polar residues; the sequence is LGSTSQPCLFQTPDSGPKTCTP. At threonine 174 the chain carries Phosphothreonine; by host. Serine 177 is subject to Phosphoserine; by host. Residues 178–189 are compositionally biased toward pro residues; it reads FPPPSPGPSCPT.

This sequence belongs to the deltaretrovirus Rex protein family. In terms of assembly, homomultimer. Multimeric assembly is essential for activity and involves XPO1. Binds to human XPO1 and KPNB1. Interacts (via N-terminal nuclear localization signal) with human NPM1.

It is found in the host nucleus. The protein resides in the host nucleolus. Its subcellular location is the host cytoplasm. In terms of biological role, rex escorts unspliced gag-pro-pol and singly spliced env mRNAs out of the nucleus of infected cells. These mRNAs carry a recognition sequence called Rex responsive element (RxRE or XRE) located at the 3' region of the long terminal repeat (LTR). This function is essential since most HTLV proteins are translated from unspliced or partially spliced pre-mRNAs that cannot exit the nucleus by the pathway used by fully processed cellular mRNAs. Rex itself is translated from a fully spliced mRNA that probably readily exits the nucleus. Rex's nuclear localization signal (NLS) binds directly to KPNB1/importin beta-1 without previous binding to KPNA1/importin alpha-1. KPNB1 binds to the GDP bound form of RAN (Ran-GDP) and targets Rex to the nucleus. In the nucleus, the conversion from Ran-GDP to Ran-GTP dissociates Rex from KPNB1 and allows Rex's binding to the RRE in viral pre-mRNAs. Rex multimerizes on the RRE via cooperative assembly. This multimerization is critical for its full biological activity, since it may shield the viral RNA from being spliced or down-regulated, and probably exposes Rex's nuclear export signal (NES) to the surface. Rex can then form a complex with XPO1/CRM1, RANBP3 and Ran-GTP, leading to nuclear export of the complex. Conversion from Ran-GTP to Ran-GDP mediates dissociation of the Rex/RRE/XPO1/RANBP3/RAN complex, so that Rex can return to the nucleus for a subsequent round of export. This chain is Protein Rex, found in Human T-cell leukemia virus 1 (strain Japan ATK-1 subtype A) (HTLV-1).